A 567-amino-acid polypeptide reads, in one-letter code: uncharacterized protein (567 aa).

The tract at residues 1-26 is disordered; that stretch reads MPSEKATTRHLPGAVETLSPRTGRRP. The next 6 helical transmembrane spans lie at 57 to 77, 90 to 110, 142 to 162, 173 to 193, 221 to 241, and 257 to 277; these read AILV…TVAF, VSFG…TYWL, VALA…IIYG, LFSM…LTEF, MLVW…TAIF, and VLIL…ILAW. The HAMP domain maps to 277–329; that stretch reads WLTATPVRVVREALNRVEQGDLSGDLVVFDGTELGELQRGFNRMVEGLRERER. Residues 361–485 form the Guanylate cyclase domain; the sequence is AVVFVDIVGS…EPVNEAARLC (125 aa).

The protein belongs to the adenylyl cyclase class-3 family.

It localises to the cell membrane. This is an uncharacterized protein from Mycobacterium bovis (strain ATCC BAA-935 / AF2122/97).